The primary structure comprises 208 residues: HTLV-1 basic zipper factor (208 aa).

Residues 59-93 (RLRWGPVGEEAPPRGETHRDRQRRAEEKRKRKRER) form a disordered region. Residues 69–86 (APPRGETHRDRQRRAEEK) are compositionally biased toward basic and acidic residues. 3 consecutive short sequence motifs (nuclear localization signal) follow at residues 86 to 91 (KRKRKR), 115 to 119 (RRRRA), and 136 to 140 (RRERK). Residues 125 to 143 (DRARRKLEEEERRERKWRQ) are compositionally biased toward basic and acidic residues. The interval 125 to 160 (DRARRKLEEEERRERKWRQTEQGAKQRSARKEKMTE) is disordered.

This sequence belongs to the HTLV-1 HBZ protein family. In terms of assembly, interacts with host ATF4; this interaction inhibits viral RNA transcriptional activation by preventing ATF4 binding to Tax-responsive elements. Interacts with host CREB1; this interaction inhibits host CREB1 transcriptional activity. Interacts with host JUN, JUNB and JUND. Interacts with host EP300.

It is found in the host nucleus. Contributes to the regulation of viral RNA transcription by interacting with host proteins involved in transcriptional activation such as ATF4, or CREB1, and by inhibiting their activity. Additionally, HBZ suppresses host NF-kappa-B-driven transcription mediated by host RELA as well as transcription of some classical NF-kappa-B target genes, including IL8, IL2RA, IRF4, VCAM1, and VEGFA. This is HTLV-1 basic zipper factor (HBZ) from Human T-cell leukemia virus 1 (isolate Melanesia mel5 subtype C) (HTLV-1).